Consider the following 309-residue polypeptide: NADH-cytochrome b5 reductase 2 (309 aa).

A helical transmembrane segment spans residues 3-23; the sequence is ILTAPVLIGVSIVVITVLYLF. The region spanning 48 to 160 is the FAD-binding FR-type domain; the sequence is SVKYPLPLIE…RGPNGLLVYN (113 aa). FAD-binding positions include 140-170 and 179-214; these read DNMKIGDTIDFRGPNGLLVYNGKGKFAIRPD and KFKHVAMIAGGTGITPMLQLIRSITADSFDETVCSL.

It belongs to the flavoprotein pyridine nucleotide cytochrome reductase family. FAD is required as a cofactor.

Its subcellular location is the membrane. It catalyses the reaction 2 Fe(III)-[cytochrome b5] + NADH = 2 Fe(II)-[cytochrome b5] + NAD(+) + H(+). Functionally, NADH-cytochrome b5 reductases are involved in desaturation and elongation of fatty acids, cholesterol biosynthesis and drug metabolism. In Danio rerio (Zebrafish), this protein is NADH-cytochrome b5 reductase 2 (cyb5r2).